We begin with the raw amino-acid sequence, 287 residues long: HTH-type transcriptional regulator MurR (287 aa).

Positions 1-77 constitute an HTH rpiR-type domain; it reads MLYLAKMRNA…MALIEEHSVS (77 aa). A DNA-binding region (H-T-H motif) is located at residues 37-56; it reads SRNMAKQLEISQSSIVKFAQ. The 141-residue stretch at 128–268 folds into the SIS domain; that stretch reads VINLISKAPL…FVGMVQLNDV (141 aa).

Homotetramer.

The protein operates within amino-sugar metabolism; N-acetylmuramate degradation [regulation]. Its function is as follows. Represses the expression of the murPQ operon involved in the uptake and degradation of N-acetylmuramic acid (MurNAc). Binds to two adjacent inverted repeats within the operator region. MurNAc 6-phosphate, the substrate of MurQ, is the specific inducer that weakens binding of MurR to the operator. The protein is HTH-type transcriptional regulator MurR of Salmonella arizonae (strain ATCC BAA-731 / CDC346-86 / RSK2980).